Here is a 400-residue protein sequence, read N- to C-terminus: tRNA-specific 2-thiouridylase MnmA (400 aa).

Residues 19–26 (AMSGGVDS) and Leu45 contribute to the ATP site. Residue Cys113 is the Nucleophile of the active site. Cys113 and Cys210 are oxidised to a cystine. Gly137 is a binding site for ATP. The segment at 160 to 162 (RDQ) is interaction with tRNA. Catalysis depends on Cys210, which acts as the Cysteine persulfide intermediate.

Belongs to the MnmA/TRMU family.

Its subcellular location is the cytoplasm. It carries out the reaction S-sulfanyl-L-cysteinyl-[protein] + uridine(34) in tRNA + AH2 + ATP = 2-thiouridine(34) in tRNA + L-cysteinyl-[protein] + A + AMP + diphosphate + H(+). Its function is as follows. Catalyzes the 2-thiolation of uridine at the wobble position (U34) of tRNA, leading to the formation of s(2)U34. The sequence is that of tRNA-specific 2-thiouridylase MnmA from Rhodopseudomonas palustris (strain BisA53).